A 902-amino-acid polypeptide reads, in one-letter code: Cytosolic 10-formyltetrahydrofolate dehydrogenase (902 aa).

Residues 1–310 (MKIAVIGQSL…PASQYFKTAD (310 aa)) form a hydrolase domain region. A (6R)-10-formyltetrahydrofolate-binding site is contributed by 88–90 (QFI). Residue H106 is the Proton donor of the active site. D142 is a binding site for (6R)-10-formyltetrahydrofolate. In terms of domain architecture, Carrier spans 318–395 (EEEQKVSEEI…EFIQMVVRRM (78 aa)). Residue S354 is modified to O-(pantetheine 4'-phosphoryl)serine. The interval 417 to 902 (TVKIPHQLFI…LKTKAVTIEY (486 aa)) is aldehyde dehydrogenase domain. NADP(+)-binding positions include 571–573 (IPW), 597–600 (KPAQ), 630–635 (GSLIGQ), 650–651 (GS), and 673–674 (EL). The active-site Proton acceptor is the E673. C707 acts as the Proton donor in catalysis. NADP(+) contacts are provided by residues K757 and 804 to 806 (ESF).

The protein in the N-terminal section; belongs to the GART family. This sequence in the C-terminal section; belongs to the aldehyde dehydrogenase family. ALDH1L subfamily. As to quaternary structure, homotetramer. In terms of processing, phosphopantetheinylation at Ser-354 by AASDHPPT is required for the formyltetrahydrofolate dehydrogenase activity.

The protein resides in the cytoplasm. It is found in the cytosol. The enzyme catalyses (6R)-10-formyltetrahydrofolate + NADP(+) + H2O = (6S)-5,6,7,8-tetrahydrofolate + CO2 + NADPH + H(+). Cytosolic 10-formyltetrahydrofolate dehydrogenase that catalyzes the NADP(+)-dependent conversion of 10-formyltetrahydrofolate to tetrahydrofolate and carbon dioxide. May also have an NADP(+)-dependent aldehyde dehydrogenase activity towards formaldehyde, acetaldehyde, propionaldehyde, and benzaldehyde. This is Cytosolic 10-formyltetrahydrofolate dehydrogenase (aldh1l1) from Xenopus laevis (African clawed frog).